The chain runs to 192 residues: Probable Brix domain-containing ribosomal biogenesis protein (192 aa).

The 190-residue stretch at 2–191 (RPAAITTSQR…DFRTKDERMK (190 aa)) folds into the Brix domain.

Its function is as follows. Probably involved in the biogenesis of the ribosome. This is Probable Brix domain-containing ribosomal biogenesis protein from Methanopyrus kandleri (strain AV19 / DSM 6324 / JCM 9639 / NBRC 100938).